Here is a 34-residue protein sequence, read N- to C-terminus: Photosystem II reaction center protein M (34 aa).

Residues 5-25 (ILAFIATALFILVPTAFLLII) form a helical membrane-spanning segment.

This sequence belongs to the PsbM family. In terms of assembly, PSII is composed of 1 copy each of membrane proteins PsbA, PsbB, PsbC, PsbD, PsbE, PsbF, PsbH, PsbI, PsbJ, PsbK, PsbL, PsbM, PsbT, PsbX, PsbY, PsbZ, Psb30/Ycf12, at least 3 peripheral proteins of the oxygen-evolving complex and a large number of cofactors. It forms dimeric complexes.

The protein resides in the plastid. Its subcellular location is the chloroplast thylakoid membrane. Its function is as follows. One of the components of the core complex of photosystem II (PSII). PSII is a light-driven water:plastoquinone oxidoreductase that uses light energy to abstract electrons from H(2)O, generating O(2) and a proton gradient subsequently used for ATP formation. It consists of a core antenna complex that captures photons, and an electron transfer chain that converts photonic excitation into a charge separation. This subunit is found at the monomer-monomer interface. The polypeptide is Photosystem II reaction center protein M (Cenchrus americanus (Pearl millet)).